The following is a 177-amino-acid chain: ATP synthase subunit delta (177 aa).

The protein belongs to the ATPase delta chain family. F-type ATPases have 2 components, F(1) - the catalytic core - and F(0) - the membrane proton channel. F(1) has five subunits: alpha(3), beta(3), gamma(1), delta(1), epsilon(1). F(0) has three main subunits: a(1), b(2) and c(10-14). The alpha and beta chains form an alternating ring which encloses part of the gamma chain. F(1) is attached to F(0) by a central stalk formed by the gamma and epsilon chains, while a peripheral stalk is formed by the delta and b chains.

Its subcellular location is the cell membrane. Functionally, f(1)F(0) ATP synthase produces ATP from ADP in the presence of a proton or sodium gradient. F-type ATPases consist of two structural domains, F(1) containing the extramembraneous catalytic core and F(0) containing the membrane proton channel, linked together by a central stalk and a peripheral stalk. During catalysis, ATP synthesis in the catalytic domain of F(1) is coupled via a rotary mechanism of the central stalk subunits to proton translocation. Its function is as follows. This protein is part of the stalk that links CF(0) to CF(1). It either transmits conformational changes from CF(0) to CF(1) or is implicated in proton conduction. This Buchnera aphidicola subsp. Schizaphis graminum (strain Sg) protein is ATP synthase subunit delta.